Consider the following 111-residue polypeptide: Nucleoid-associated protein SynRCC307_0025 (111 aa).

Belongs to the YbaB/EbfC family. In terms of assembly, homodimer.

The protein localises to the cytoplasm. The protein resides in the nucleoid. Binds to DNA and alters its conformation. May be involved in regulation of gene expression, nucleoid organization and DNA protection. This is Nucleoid-associated protein SynRCC307_0025 from Synechococcus sp. (strain RCC307).